Here is a 441-residue protein sequence, read N- to C-terminus: N-succinylarginine dihydrolase (441 aa).

Residues Ala19–Ser28, Asn110, and His137–Arg138 each bind substrate. The active site involves Glu174. Residue Arg212 coordinates substrate. His248 is a catalytic residue. Residues Asp250 and Asn359 each coordinate substrate. Residue Cys365 is the Nucleophile of the active site.

This sequence belongs to the succinylarginine dihydrolase family. As to quaternary structure, homodimer.

The enzyme catalyses N(2)-succinyl-L-arginine + 2 H2O + 2 H(+) = N(2)-succinyl-L-ornithine + 2 NH4(+) + CO2. The protein operates within amino-acid degradation; L-arginine degradation via AST pathway; L-glutamate and succinate from L-arginine: step 2/5. Catalyzes the hydrolysis of N(2)-succinylarginine into N(2)-succinylornithine, ammonia and CO(2). This chain is N-succinylarginine dihydrolase, found in Erwinia tasmaniensis (strain DSM 17950 / CFBP 7177 / CIP 109463 / NCPPB 4357 / Et1/99).